We begin with the raw amino-acid sequence, 1986 residues long: Protein Shroom3 (1986 aa).

A disordered region spans residues 1 to 21; sequence MKTPENLEEPSATPNPSRTPT. The 86-residue stretch at 24–109 folds into the PDZ domain; sequence FVYLEALLEG…TLRLVVRRDV (86 aa). Disordered stretches follow at residues 152-199, 211-239, 265-285, 342-463, and 564-1055; these read CSEP…SSTS, RSPDQCSSQGSMESLEPSGGYPPCHLLSP, TSSSIFEYPPPGGSARERSGS, QGCA…QPLL, and NEDS…RRIF. A Phosphoserine modification is found at serine 212. Composition is skewed to polar residues over residues 357–376 and 415–425; these read PSPSWSQQCSGSLETATDNL and PQTNSSGSQKT. Residues 430–440 are compositionally biased toward basic and acidic residues; the sequence is DQLHTVPERSP. Phosphoserine occurs at positions 439 and 443. Over residues 595–607 the composition is skewed to polar residues; that stretch reads ACSNHHSLSSPQA. Over residues 630–645 the composition is skewed to basic and acidic residues; it reads QEDHNANLRQKVEREG. Residues 653–677 show a composition bias toward polar residues; it reads NSGRTRSAFSSLQNIPESLRRQSNV. Residues 747–761 show a composition bias toward low complexity; sequence SGASQRRLSSSSSAA. Residues 774-785 show a composition bias toward basic and acidic residues; it reads KVSRIEEREQGR. Low complexity-rich tracts occupy residues 796-814 and 865-874; these read YGPGYRPGRTGPTPSTSSS and DGRGPPARGG. Residue serine 888 is modified to Phosphoserine. The span at 895 to 908 shows a compositional bias: basic and acidic residues; sequence EAEREASWSEDRPG. Position 909 is a phosphothreonine (threonine 909). Serine 912 and serine 969 each carry phosphoserine. Positions 927–1023 constitute an ASD1 domain; sequence IKDAQSRVLG…SEPEKMNEVG (97 aa). Positions 1004–1020 are enriched in basic and acidic residues; the sequence is LTVEQKKRSYSEPEKMN. Phosphoserine occurs at positions 1063 and 1066. Disordered stretches follow at residues 1083–1102, 1107–1223, 1304–1425, and 1446–1654; these read YIQRKTGKRPTGAACTPEAG, AQSA…AEDL, ATVA…PPWV, and ANLK…KTSE. Residues 1114–1127 are compositionally biased toward low complexity; that stretch reads AGPAAPDGPGLASA. The segment covering 1134-1146 has biased composition (basic and acidic residues); sequence REPEALPRKEHTH. A phosphoserine mark is found at tryptophan 1175, valine 1179, and serine 1219. The segment covering 1307-1318 has biased composition (low complexity); the sequence is ASSAPPESSGAA. A phosphoserine mark is found at serine 1350 and serine 1354. Residues 1366 to 1399 are compositionally biased toward polar residues; it reads YRSQLAMDQQTGQQPPSSPASAVTQPTSPRSPEL. Residues 1455–1469 show a composition bias toward low complexity; the sequence is PSRPSSCSTSDPDTP. Over residues 1513 to 1524 the composition is skewed to pro residues; it reads LPPPPPPSPPSE. Over residues 1581–1630 the composition is skewed to polar residues; sequence EGSQIMTATPPQTSAKGSEAESNTPSSASAQPQLNGSPGKQLCPSQTRNL. The span at 1634 to 1654 shows a compositional bias: basic and acidic residues; sequence PVERTQDLGKKTHAEPQKTSE. The region spanning 1659 to 1947 is the ASD2 domain; sequence EALAKEIVHQ…QVRCLLESLP (289 aa). A coiled-coil region spans residues 1844 to 1890; it reads RLARVENVLRGLGEDASKEERSSLNEKRKVLAGQHEDARELKENLDR.

It belongs to the shroom family. In terms of assembly, interacts with F-actin. Interacts with ROCK1.

It is found in the cell junction. It localises to the adherens junction. Its subcellular location is the cytoplasm. The protein resides in the cytoskeleton. The protein localises to the apical cell membrane. Its function is as follows. Controls cell shape changes in the neuroepithelium during neural tube closure. Induces apical constriction in epithelial cells by promoting the apical accumulation of F-actin and myosin II, and probably by bundling stress fibers. Induces apicobasal cell elongation by redistributing gamma-tubulin and directing the assembly of robust apicobasal microtubule arrays. The sequence is that of Protein Shroom3 (Shroom3) from Mus musculus (Mouse).